Here is a 181-residue protein sequence, read N- to C-terminus: Adenine phosphoribosyltransferase (181 aa).

Belongs to the purine/pyrimidine phosphoribosyltransferase family. Homodimer.

It localises to the cytoplasm. The enzyme catalyses AMP + diphosphate = 5-phospho-alpha-D-ribose 1-diphosphate + adenine. It participates in purine metabolism; AMP biosynthesis via salvage pathway; AMP from adenine: step 1/1. Catalyzes a salvage reaction resulting in the formation of AMP, that is energically less costly than de novo synthesis. This Psychromonas ingrahamii (strain DSM 17664 / CCUG 51855 / 37) protein is Adenine phosphoribosyltransferase.